We begin with the raw amino-acid sequence, 108 residues long: Movement protein TGB2 (108 aa).

At 1 to 8 the chain is on the cytoplasmic side; that stretch reads MPLTPPPN. A helical membrane pass occupies residues 9–29; that stretch reads YTGLYIAAALGVSLAAVVALF. Topologically, residues 30–72 are lumenal; that stretch reads TRSTLPIVGDSQHNLPHGGRYRDGTKAIDYFKPTKLNSVEPGN. The chain crosses the membrane as a helical span at residues 73-93; the sequence is YWYTQPWLLVILLVALICLSG. The Cytoplasmic segment spans residues 94–108; sequence RHAQCCPRCNRVHSA.

This sequence belongs to the Tymovirales TGBp2 protein family.

Its subcellular location is the host endoplasmic reticulum membrane. Its function is as follows. Plays a role in viral cell-to-cell propagation, by facilitating genome transport to neighboring plant cells through plasmosdesmata,. This chain is Movement protein TGB2, found in Solanum tuberosum (Potato).